The primary structure comprises 393 residues: Homoserine O-succinyltransferase (393 aa).

An AB hydrolase-1 domain is found at 62–372; that stretch reads NAVLVCHALN…PHGHDAFLLD (311 aa). The Nucleophile role is filled by Ser-168. Arg-238 lines the substrate pocket. Active-site residues include Asp-333 and His-366. Residue Asp-367 coordinates substrate.

It belongs to the AB hydrolase superfamily. MetX family. In terms of assembly, homodimer.

The protein resides in the cytoplasm. It catalyses the reaction L-homoserine + succinyl-CoA = O-succinyl-L-homoserine + CoA. It participates in amino-acid biosynthesis; L-methionine biosynthesis via de novo pathway; O-succinyl-L-homoserine from L-homoserine: step 1/1. In terms of biological role, transfers a succinyl group from succinyl-CoA to L-homoserine, forming succinyl-L-homoserine. The sequence is that of Homoserine O-succinyltransferase from Cupriavidus necator (strain ATCC 17699 / DSM 428 / KCTC 22496 / NCIMB 10442 / H16 / Stanier 337) (Ralstonia eutropha).